The sequence spans 116 residues: Immunoglobulin heavy variable 3-66 (116 aa).

The first 19 residues, 1–19 (MEFGLSWVFLVAILKGVQC), serve as a signal peptide directing secretion. Residues 20–44 (EVQLVESGGGLIQPGGSLRLSCAAS) are framework-1. Positions 20–116 (EVQLVESGGG…EDTAVYYCAR (97 aa)) constitute an Ig-like domain. The cysteines at positions 41 and 114 are disulfide-linked. Residues 45–52 (GFTVSSNY) form a complementarity-determining-1 region. The interval 53-69 (MSWVRQAPGKGLEWVSV) is framework-2. A complementarity-determining-2 region spans residues 70–76 (IYSCGST). The interval 77-114 (YYADSVKGRFTISRDNSKNTLYLQMNSLRAEDTAVYYC) is framework-3. The tract at residues 115 to 116 (AR) is complementarity-determining-3.

Immunoglobulins are composed of two identical heavy chains and two identical light chains; disulfide-linked.

Its subcellular location is the secreted. The protein localises to the cell membrane. Its function is as follows. V region of the variable domain of immunoglobulin heavy chains that participates in the antigen recognition. Immunoglobulins, also known as antibodies, are membrane-bound or secreted glycoproteins produced by B lymphocytes. In the recognition phase of humoral immunity, the membrane-bound immunoglobulins serve as receptors which, upon binding of a specific antigen, trigger the clonal expansion and differentiation of B lymphocytes into immunoglobulins-secreting plasma cells. Secreted immunoglobulins mediate the effector phase of humoral immunity, which results in the elimination of bound antigens. The antigen binding site is formed by the variable domain of one heavy chain, together with that of its associated light chain. Thus, each immunoglobulin has two antigen binding sites with remarkable affinity for a particular antigen. The variable domains are assembled by a process called V-(D)-J rearrangement and can then be subjected to somatic hypermutations which, after exposure to antigen and selection, allow affinity maturation for a particular antigen. The sequence is that of Immunoglobulin heavy variable 3-66 from Homo sapiens (Human).